The primary structure comprises 117 residues: Peptidyl-tRNA hydrolase (117 aa).

The protein belongs to the PTH2 family.

The protein resides in the cytoplasm. It carries out the reaction an N-acyl-L-alpha-aminoacyl-tRNA + H2O = an N-acyl-L-amino acid + a tRNA + H(+). Functionally, the natural substrate for this enzyme may be peptidyl-tRNAs which drop off the ribosome during protein synthesis. The polypeptide is Peptidyl-tRNA hydrolase (Metallosphaera sedula (strain ATCC 51363 / DSM 5348 / JCM 9185 / NBRC 15509 / TH2)).